We begin with the raw amino-acid sequence, 243 residues long: Leucyl/phenylalanyl-tRNA--protein transferase (243 aa).

Belongs to the L/F-transferase family.

It is found in the cytoplasm. It catalyses the reaction N-terminal L-lysyl-[protein] + L-leucyl-tRNA(Leu) = N-terminal L-leucyl-L-lysyl-[protein] + tRNA(Leu) + H(+). The enzyme catalyses N-terminal L-arginyl-[protein] + L-leucyl-tRNA(Leu) = N-terminal L-leucyl-L-arginyl-[protein] + tRNA(Leu) + H(+). The catalysed reaction is L-phenylalanyl-tRNA(Phe) + an N-terminal L-alpha-aminoacyl-[protein] = an N-terminal L-phenylalanyl-L-alpha-aminoacyl-[protein] + tRNA(Phe). Its function is as follows. Functions in the N-end rule pathway of protein degradation where it conjugates Leu, Phe and, less efficiently, Met from aminoacyl-tRNAs to the N-termini of proteins containing an N-terminal arginine or lysine. This is Leucyl/phenylalanyl-tRNA--protein transferase from Vibrio cholerae serotype O1 (strain ATCC 39315 / El Tor Inaba N16961).